The sequence spans 338 residues: Glutamyl-tRNA reductase (338 aa).

Substrate is bound by residues 50-53 (TCHR), Ser-102, 107-109 (ETE), and Gln-113. Cys-51 functions as the Nucleophile in the catalytic mechanism. 181–186 (GYSDIN) serves as a coordination point for NADP(+).

The protein belongs to the glutamyl-tRNA reductase family. As to quaternary structure, homodimer.

It carries out the reaction (S)-4-amino-5-oxopentanoate + tRNA(Glu) + NADP(+) = L-glutamyl-tRNA(Glu) + NADPH + H(+). It functions in the pathway porphyrin-containing compound metabolism; protoporphyrin-IX biosynthesis; 5-aminolevulinate from L-glutamyl-tRNA(Glu): step 1/2. In terms of biological role, catalyzes the NADPH-dependent reduction of glutamyl-tRNA(Glu) to glutamate 1-semialdehyde (GSA). This is Glutamyl-tRNA reductase from Chlamydia caviae (strain ATCC VR-813 / DSM 19441 / 03DC25 / GPIC) (Chlamydophila caviae).